The chain runs to 88 residues: Phosphocarrier protein HPr (88 aa).

An HPr domain is found at 1-88; the sequence is MEKRDFHVVA…ETMKKEGLSE (88 aa). The active-site Pros-phosphohistidine intermediate is the histidine 15. Serine 46 is subject to Phosphoserine; by HPrK/P.

The protein belongs to the HPr family.

Its subcellular location is the cytoplasm. Phosphorylation on Ser-46 inhibits the phosphoryl transfer from enzyme I to HPr. Functionally, general (non sugar-specific) component of the phosphoenolpyruvate-dependent sugar phosphotransferase system (sugar PTS). This major carbohydrate active-transport system catalyzes the phosphorylation of incoming sugar substrates concomitantly with their translocation across the cell membrane. The phosphoryl group from phosphoenolpyruvate (PEP) is transferred to the phosphoryl carrier protein HPr by enzyme I. Phospho-HPr then transfers it to the PTS EIIA domain. In terms of biological role, P-Ser-HPr interacts with the catabolite control protein A (CcpA), forming a complex that binds to DNA at the catabolite response elements cre, operator sites preceding a large number of catabolite-regulated genes. Thus, P-Ser-HPr is a corepressor in carbon catabolite repression (CCR), a mechanism that allows bacteria to coordinate and optimize the utilization of available carbon sources. P-Ser-HPr also plays a role in inducer exclusion, in which it probably interacts with several non-PTS permeases and inhibits their transport activity. This chain is Phosphocarrier protein HPr (ptsH), found in Latilactobacillus sakei (Lactobacillus sakei).